The sequence spans 210 residues: MTTTPGTLYIISAPSGAGKTSLVKALLQTGIDLSLSISYTSRQPRPEEMDGRDYHFVTRQVFEQKLQEDEFLESAELYGNFYGTSKKWINETMTSGRDILLEIDSQGARQVRAVFPVAVGIFVLPPSLEVLEMRLRQRAQDSLEAISRRLAAAREELSHAGEYNYIIINDKLDRALQDLKCIIQAERLKTAKQLVRHHGLLAQLTRTSVL.

The 179-residue stretch at 6–184 (GTLYIISAPS…ALQDLKCIIQ (179 aa)) folds into the Guanylate kinase-like domain. An ATP-binding site is contributed by 13–20 (APSGAGKT).

Belongs to the guanylate kinase family.

The protein localises to the cytoplasm. The catalysed reaction is GMP + ATP = GDP + ADP. Essential for recycling GMP and indirectly, cGMP. This Nitrosospira multiformis (strain ATCC 25196 / NCIMB 11849 / C 71) protein is Guanylate kinase.